The following is a 510-amino-acid chain: Bifunctional pantoate ligase/cytidylate kinase (510 aa).

Positions 1-276 (MKKVIIRKTE…CGETRLIDHV (276 aa)) are pantoate--beta-alanine ligase. An ATP-binding site is contributed by 29 to 36 (MGNLHDGH). His36 functions as the Proton donor in the catalytic mechanism. Gln61 is a binding site for (R)-pantoate. Gln61 is a beta-alanine binding site. Residue 150 to 153 (GEKD) coordinates ATP. Residue Gln156 participates in (R)-pantoate binding. 187 to 190 (LSSR) is a binding site for ATP. The tract at residues 277 to 510 (FLMKRRPIIA…DRIPKETEIK (234 aa)) is cytidylate kinase.

It in the N-terminal section; belongs to the pantothenate synthetase family. The protein in the C-terminal section; belongs to the cytidylate kinase family. Type 1 subfamily.

The protein localises to the cytoplasm. It catalyses the reaction (R)-pantoate + beta-alanine + ATP = (R)-pantothenate + AMP + diphosphate + H(+). The enzyme catalyses CMP + ATP = CDP + ADP. The catalysed reaction is dCMP + ATP = dCDP + ADP. Its pathway is cofactor biosynthesis; (R)-pantothenate biosynthesis; (R)-pantothenate from (R)-pantoate and beta-alanine: step 1/1. Its function is as follows. Catalyzes the condensation of pantoate with beta-alanine in an ATP-dependent reaction via a pantoyl-adenylate intermediate. In terms of biological role, catalyzes the transfer of a phosphate group from ATP to either CMP or dCMP to form CDP or dCDP and ADP, respectively. This chain is Bifunctional pantoate ligase/cytidylate kinase, found in Prochlorococcus marinus (strain MIT 9301).